Reading from the N-terminus, the 147-residue chain is D-aminoacyl-tRNA deacylase (147 aa).

The short motif at 136–137 (GP) is the Gly-cisPro motif, important for rejection of L-amino acids element.

Belongs to the DTD family. As to quaternary structure, homodimer.

The protein localises to the cytoplasm. The enzyme catalyses glycyl-tRNA(Ala) + H2O = tRNA(Ala) + glycine + H(+). It carries out the reaction a D-aminoacyl-tRNA + H2O = a tRNA + a D-alpha-amino acid + H(+). Functionally, an aminoacyl-tRNA editing enzyme that deacylates mischarged D-aminoacyl-tRNAs. Also deacylates mischarged glycyl-tRNA(Ala), protecting cells against glycine mischarging by AlaRS. Acts via tRNA-based rather than protein-based catalysis; rejects L-amino acids rather than detecting D-amino acids in the active site. By recycling D-aminoacyl-tRNA to D-amino acids and free tRNA molecules, this enzyme counteracts the toxicity associated with the formation of D-aminoacyl-tRNA entities in vivo and helps enforce protein L-homochirality. This chain is D-aminoacyl-tRNA deacylase, found in Streptococcus pneumoniae (strain Taiwan19F-14).